We begin with the raw amino-acid sequence, 621 residues long: MTQEKKKFDAEVGKILNLMIHSLYSNKEIFMRELISNASDACDKLRYLSQSNSELIAGDSNFKIIVKVDKDNGQIIIRDNGIGMNKEDLIENLGTIARSGTANFLKNLSGDSKKDNMLIGQFGVGFYSSFMVADKVTVTSRKAGESKVHTWESDGLGEYIVADSEQEFTRGTEIVLYIKKSETTFLDHFRLKHIVKSYSDHIAVPIYFCDEAGNNEIQLNSASALWTRPKSEITEDQYKEFYKSLSYAVDDPWVTLHNKNEGAIEFTNLLFIPSSKTFDLFHPDRKKRVKLYIKRVFISDENIDLIPSYLRFLRGVVDSEDLPLNISRESLQHNNVLEKIKNAITKRVLGELRKKKEELPEEYNKFWTNFGGALKEGLCEATTDHEKLLEVCIFRSALHNKMISIDEYIANFKEGQNTIYYLSGDNPDKLLSSPQIEGLLNKNIDVLLFTDTVDDFWVNVNSEYKGYAIKSATRSDIDVEQTTSQPKDKNTDSKKSDNEYKLLTDYFKEILGELVKEVKISKKLTLSPACLAVSDTAMDIRMERFLIEQKQIANASAKNLELNPKNKIIEKIFNDLKANNKNNNELVNLIFDQACILEGEPVADTGAFSKRLNDILQKAIL.

The tract at residues 1–328 (MTQEKKKFDA…SEDLPLNISR (328 aa)) is a; substrate-binding. The tract at residues 329–544 (ESLQHNNVLE…DTAMDIRMER (216 aa)) is b. Positions 545-621 (FLIEQKQIAN…LNDILQKAIL (77 aa)) are c.

The protein belongs to the heat shock protein 90 family. In terms of assembly, homodimer.

It localises to the cytoplasm. Functionally, molecular chaperone. Has ATPase activity. The chain is Chaperone protein HtpG from Rickettsia prowazekii (strain Madrid E).